Reading from the N-terminus, the 750-residue chain is Photosystem I P700 chlorophyll a apoprotein A1 (750 aa).

A run of 8 helical transmembrane segments spans residues 70 to 93 (VFSA…FHGA), 156 to 179 (LYCT…FHYH), 195 to 219 (LNHH…HVSL), 291 to 309 (IAHH…GHMY), 346 to 369 (WHAQ…HHMY), 385 to 411 (LSLF…IFMV), 433 to 455 (AIIS…LYIH), and 531 to 549 (FLVH…LILL). Residues cysteine 573 and cysteine 582 each coordinate [4Fe-4S] cluster. Helical transmembrane passes span 589–610 (HVFL…HFSW) and 664–686 (LSAY…MFLF). Residue histidine 675 coordinates chlorophyll a'. 2 residues coordinate chlorophyll a: methionine 683 and tyrosine 691. Phylloquinone is bound at residue tryptophan 692. The chain crosses the membrane as a helical span at residues 724-744 (AVGVTHYLLGGIATTWAFFLA).

The protein belongs to the PsaA/PsaB family. As to quaternary structure, the PsaA/B heterodimer binds the P700 chlorophyll special pair and subsequent electron acceptors. PSI consists of a core antenna complex that captures photons, and an electron transfer chain that converts photonic excitation into a charge separation. The eukaryotic PSI reaction center is composed of at least 11 subunits. Requires P700 is a chlorophyll a/chlorophyll a' dimer, A0 is one or more chlorophyll a, A1 is one or both phylloquinones and FX is a shared 4Fe-4S iron-sulfur center. as cofactor.

It localises to the plastid. It is found in the chloroplast thylakoid membrane. The enzyme catalyses reduced [plastocyanin] + hnu + oxidized [2Fe-2S]-[ferredoxin] = oxidized [plastocyanin] + reduced [2Fe-2S]-[ferredoxin]. PsaA and PsaB bind P700, the primary electron donor of photosystem I (PSI), as well as the electron acceptors A0, A1 and FX. PSI is a plastocyanin-ferredoxin oxidoreductase, converting photonic excitation into a charge separation, which transfers an electron from the donor P700 chlorophyll pair to the spectroscopically characterized acceptors A0, A1, FX, FA and FB in turn. Oxidized P700 is reduced on the lumenal side of the thylakoid membrane by plastocyanin. The protein is Photosystem I P700 chlorophyll a apoprotein A1 of Nasturtium officinale (Watercress).